Here is a 275-residue protein sequence, read N- to C-terminus: DNA repair protein RecO (275 aa).

The interval 1-38 (MTDEADADPQPFAAPPATGAPAADKPARKPRRAAPRTS) is disordered. Residues 8–24 (DPQPFAAPPATGAPAAD) show a composition bias toward low complexity.

The protein belongs to the RecO family.

Its function is as follows. Involved in DNA repair and RecF pathway recombination. The polypeptide is DNA repair protein RecO (Burkholderia pseudomallei (strain 1710b)).